The sequence spans 372 residues: sn-glycerol-3-phosphate import ATP-binding protein UgpC (372 aa).

Residues 2–233 enclose the ABC transporter domain; the sequence is LDIQQLVKTY…PASTFVASFI (232 aa). 35-42 lines the ATP pocket; that stretch reads GPSGCGKS.

This sequence belongs to the ABC transporter superfamily. sn-glycerol-3-phosphate importer (TC 3.A.1.1.3) family. In terms of assembly, the complex is composed of two ATP-binding proteins (UgpC), two transmembrane proteins (UgpA and UgpE) and a solute-binding protein (UgpB).

It is found in the cell inner membrane. It carries out the reaction sn-glycerol 3-phosphate(out) + ATP + H2O = sn-glycerol 3-phosphate(in) + ADP + phosphate + H(+). In terms of biological role, part of the ABC transporter complex UgpBAEC involved in sn-glycerol-3-phosphate (G3P) import. Responsible for energy coupling to the transport system. In Vibrio vulnificus (strain YJ016), this protein is sn-glycerol-3-phosphate import ATP-binding protein UgpC.